We begin with the raw amino-acid sequence, 267 residues long: Phosphate import ATP-binding protein PstB (267 aa).

The ABC transporter domain occupies 12–251; sequence VSLDNVSIRY…EFDKTKNMFN (240 aa). Residue 44-51 participates in ATP binding; the sequence is GPSGCGKS.

This sequence belongs to the ABC transporter superfamily. Phosphate importer (TC 3.A.1.7) family. In terms of assembly, the complex is composed of two ATP-binding proteins (PstB), two transmembrane proteins (PstC and PstA) and a solute-binding protein (PstS).

It is found in the cell inner membrane. It carries out the reaction phosphate(out) + ATP + H2O = ADP + 2 phosphate(in) + H(+). Functionally, part of the ABC transporter complex PstSACB involved in phosphate import. Responsible for energy coupling to the transport system. This chain is Phosphate import ATP-binding protein PstB, found in Prochlorococcus marinus (strain NATL2A).